We begin with the raw amino-acid sequence, 372 residues long: Gibberellin 20 oxidase 1 (372 aa).

Residues 209-309 (RNDSIMRLNY…RRSLAFFLCP (101 aa)) form the Fe2OG dioxygenase domain. Fe cation is bound by residues His-234, Asp-236, and His-290. Residue Arg-300 is part of the active site.

It belongs to the iron/ascorbate-dependent oxidoreductase family. GA20OX subfamily. The cofactor is Fe(2+). L-ascorbate serves as cofactor. As to expression, preferentially expressed in reproductive organs. Expressed in the epithelium of embryos and the tapetum of anthers. Expressed at low levels in the shoot apical meristem.

The enzyme catalyses gibberellin A12 + 2 2-oxoglutarate + 3 O2 + H(+) = gibberellin A9 + 2 succinate + 3 CO2 + 2 H2O. It carries out the reaction gibberellin A53 + 2 2-oxoglutarate + 3 O2 + H(+) = gibberellin A20 + 2 succinate + 3 CO2 + 2 H2O. Key oxidase enzyme in the biosynthesis of gibberellin. Catalyzes the conversion of GA12 and GA53 to GA9 and GA20 respectively, via a three-step oxidation at C-20 of the GA skeleton. This Oryza sativa subsp. japonica (Rice) protein is Gibberellin 20 oxidase 1.